Here is a 284-residue protein sequence, read N- to C-terminus: Serine/arginine-rich splicing factor RS2Z32 (284 aa).

The RRM domain maps to 11 to 81; the sequence is TRLYVGRLSS…SRITVEASRG (71 aa). Residues 74 to 97 form a disordered region; that stretch reads ITVEASRGAPRGSRDNGSRGPPPG. 2 CCHC-type zinc fingers span residues 99-116 and 121-138; these read GRCF…DCTA and NKCY…NCKN. A disordered region spans residues 132-284; it reads IERNCKNSPS…RPSPKGSESP (153 aa). The span at 159-180 shows a compositional bias: basic residues; sequence RSPRRRRSPSRSRSYSRGRSYS. 3 positions are modified to phosphoserine: serine 166, serine 168, and serine 184. The segment covering 186 to 203 has biased composition (basic and acidic residues); the sequence is VRREKSVEDRSRSPKAME. A phosphoserine mark is found at serine 205, serine 207, serine 214, serine 216, serine 225, serine 235, serine 255, serine 265, serine 277, and serine 281. Over residues 209-236 the composition is skewed to basic and acidic residues; the sequence is KGRDQSLSPDRKVIDASPKRGSDYDGSP.

It belongs to the splicing factor SR family. RS2Z subfamily. Component of the spliceosome. In terms of processing, extensively phosphorylated on serine residues in the RS domain.

The protein localises to the nucleus. Its function is as follows. Probably involved in intron recognition and spliceosome assembly. This is Serine/arginine-rich splicing factor RS2Z32 (RS2Z32) from Arabidopsis thaliana (Mouse-ear cress).